The sequence spans 1427 residues: DNA-directed RNA polymerase subunit beta' (1427 aa).

Residues cysteine 70, cysteine 72, cysteine 85, and cysteine 88 each contribute to the Zn(2+) site. Residues aspartate 461, aspartate 463, and aspartate 465 each contribute to the Mg(2+) site. The Zn(2+) site is built by cysteine 809, cysteine 882, cysteine 889, and cysteine 892. The tract at residues 1394 to 1427 (EAAIGDDPLGKVQGEDFTTDDVMVEERPEGASEE) is disordered. Basic and acidic residues predominate over residues 1417–1427 (VEERPEGASEE).

It belongs to the RNA polymerase beta' chain family. In terms of assembly, the RNAP catalytic core consists of 2 alpha, 1 beta, 1 beta' and 1 omega subunit. When a sigma factor is associated with the core the holoenzyme is formed, which can initiate transcription. The cofactor is Mg(2+). Zn(2+) is required as a cofactor.

The enzyme catalyses RNA(n) + a ribonucleoside 5'-triphosphate = RNA(n+1) + diphosphate. DNA-dependent RNA polymerase catalyzes the transcription of DNA into RNA using the four ribonucleoside triphosphates as substrates. The chain is DNA-directed RNA polymerase subunit beta' from Sphingopyxis alaskensis (strain DSM 13593 / LMG 18877 / RB2256) (Sphingomonas alaskensis).